Here is a 207-residue protein sequence, read N- to C-terminus: Thiamine-phosphate synthase (207 aa).

4-amino-2-methyl-5-(diphosphooxymethyl)pyrimidine-binding positions include 36–40 and aspartate 68; that span reads QLRIK. Mg(2+)-binding residues include aspartate 69 and aspartate 88. Serine 106 is a binding site for 4-amino-2-methyl-5-(diphosphooxymethyl)pyrimidine. 132-134 lines the 2-[(2R,5Z)-2-carboxy-4-methylthiazol-5(2H)-ylidene]ethyl phosphate pocket; sequence TQT. Lysine 135 is a 4-amino-2-methyl-5-(diphosphooxymethyl)pyrimidine binding site. 2-[(2R,5Z)-2-carboxy-4-methylthiazol-5(2H)-ylidene]ethyl phosphate is bound by residues glycine 162 and 182 to 183; that span reads VS.

This sequence belongs to the thiamine-phosphate synthase family. Mg(2+) serves as cofactor.

It catalyses the reaction 2-[(2R,5Z)-2-carboxy-4-methylthiazol-5(2H)-ylidene]ethyl phosphate + 4-amino-2-methyl-5-(diphosphooxymethyl)pyrimidine + 2 H(+) = thiamine phosphate + CO2 + diphosphate. The catalysed reaction is 2-(2-carboxy-4-methylthiazol-5-yl)ethyl phosphate + 4-amino-2-methyl-5-(diphosphooxymethyl)pyrimidine + 2 H(+) = thiamine phosphate + CO2 + diphosphate. The enzyme catalyses 4-methyl-5-(2-phosphooxyethyl)-thiazole + 4-amino-2-methyl-5-(diphosphooxymethyl)pyrimidine + H(+) = thiamine phosphate + diphosphate. It functions in the pathway cofactor biosynthesis; thiamine diphosphate biosynthesis; thiamine phosphate from 4-amino-2-methyl-5-diphosphomethylpyrimidine and 4-methyl-5-(2-phosphoethyl)-thiazole: step 1/1. In terms of biological role, condenses 4-methyl-5-(beta-hydroxyethyl)thiazole monophosphate (THZ-P) and 2-methyl-4-amino-5-hydroxymethyl pyrimidine pyrophosphate (HMP-PP) to form thiamine monophosphate (TMP). This Pyrococcus horikoshii (strain ATCC 700860 / DSM 12428 / JCM 9974 / NBRC 100139 / OT-3) protein is Thiamine-phosphate synthase.